Here is a 279-residue protein sequence, read N- to C-terminus: Protease HtpX homolog (279 aa).

Transmembrane regions (helical) follow at residues 6–26 and 28–48; these read TVAL…MMGG and GGAL…YWFS. Zn(2+) is bound at residue histidine 127. Glutamate 128 is an active-site residue. Position 131 (histidine 131) interacts with Zn(2+). 2 helical membrane passes run 137 to 157 and 177 to 197; these read ILIG…AHMA and LGLL…QMAI. Zn(2+) is bound at residue glutamate 202.

The protein belongs to the peptidase M48B family. Zn(2+) serves as cofactor.

It is found in the cell inner membrane. The chain is Protease HtpX homolog from Syntrophotalea carbinolica (strain DSM 2380 / NBRC 103641 / GraBd1) (Pelobacter carbinolicus).